The following is a 481-amino-acid chain: RuvB-like helicase 2 (481 aa).

76–83 (GPPSTGKT) contributes to the ATP binding site.

This sequence belongs to the RuvB family. As to quaternary structure, may form heterododecamers with hel-1/rvb1. Component of the SWR1 chromatin remodeling complex, the INO80 chromatin remodeling complex, and of the R2TP complex.

Its subcellular location is the nucleus. It catalyses the reaction ATP + H2O = ADP + phosphate + H(+). Its function is as follows. DNA helicase which participates in several chromatin remodeling complexes, including the SWR1 and the INO80 complexes. The SWR1 complex mediates the ATP-dependent exchange of histone H2A for the H2A variant H2A.Z leading to transcriptional regulation of selected genes by chromatin remodeling. The INO80 complex remodels chromatin by shifting nucleosomes and is involved in DNA repair. Also involved in pre-rRNA processing. In Neurospora crassa (strain ATCC 24698 / 74-OR23-1A / CBS 708.71 / DSM 1257 / FGSC 987), this protein is RuvB-like helicase 2 (hel-2).